Reading from the N-terminus, the 185-residue chain is Ribosome-recycling factor (185 aa).

The protein belongs to the RRF family.

Its subcellular location is the cytoplasm. Its function is as follows. Responsible for the release of ribosomes from messenger RNA at the termination of protein biosynthesis. May increase the efficiency of translation by recycling ribosomes from one round of translation to another. The polypeptide is Ribosome-recycling factor (Shewanella amazonensis (strain ATCC BAA-1098 / SB2B)).